The following is a 269-amino-acid chain: GTP cyclohydrolase FolE2 (269 aa).

It belongs to the GTP cyclohydrolase IV family.

It catalyses the reaction GTP + H2O = 7,8-dihydroneopterin 3'-triphosphate + formate + H(+). The protein operates within cofactor biosynthesis; 7,8-dihydroneopterin triphosphate biosynthesis; 7,8-dihydroneopterin triphosphate from GTP: step 1/1. In terms of biological role, converts GTP to 7,8-dihydroneopterin triphosphate. This Burkholderia ambifaria (strain MC40-6) protein is GTP cyclohydrolase FolE2.